We begin with the raw amino-acid sequence, 240 residues long: uncharacterized protein (240 aa).

The segment at aspartate 26–lysine 52 is disordered. A helical transmembrane segment spans residues leucine 57–phenylalanine 77. The tract at residues lysine 100 to proline 185 is disordered. The span at valine 103–alanine 159 shows a compositional bias: basic and acidic residues. Residues threonine 160–proline 185 are compositionally biased toward low complexity. The region spanning valine 189 to isoleucine 235 is the LysM domain.

The protein localises to the membrane. This is an uncharacterized protein from Bacillus subtilis (strain 168).